The sequence spans 444 residues: UDP-N-acetylmuramoylalanine--D-glutamate ligase (444 aa).

113 to 119 is a binding site for ATP; the sequence is GSNGKST.

The protein belongs to the MurCDEF family.

Its subcellular location is the cytoplasm. The enzyme catalyses UDP-N-acetyl-alpha-D-muramoyl-L-alanine + D-glutamate + ATP = UDP-N-acetyl-alpha-D-muramoyl-L-alanyl-D-glutamate + ADP + phosphate + H(+). It functions in the pathway cell wall biogenesis; peptidoglycan biosynthesis. Functionally, cell wall formation. Catalyzes the addition of glutamate to the nucleotide precursor UDP-N-acetylmuramoyl-L-alanine (UMA). The protein is UDP-N-acetylmuramoylalanine--D-glutamate ligase of Blochmanniella floridana.